Consider the following 396-residue polypeptide: MARAKFLREKLHVNVGTIGHVDHGKTTLTAALTKIGAERFGGEFKAYDAIDAAPEEKARGITISTAHVEYESAVRHYAHVDCPGHADYVKNMITGAAQMDGAILVCSAADGPMPQTREHILLSRQVGVPHIVVFLNKADMVDDAELLELVEMEVRELLSKYDFPGDDTPIIHGSARLALEGDQSDIGVPAILKLVEALDTFIPDPTRDVDRPFLMPVEDVFSISGRGTVVTGRIERGIIRVGDEIEIVGIRDTHKTTVTGVEMFRKLLDQGQAGDNAGLLLRGTKRDDVERGQVLCKPGSIKPHTEFEAEVYVLSKDEGGRHTPFFKGYRPQFYFRTTDITGACQLPEGVEMVMPGDNVKMVVTLINPVAMDEGLRFAIREGGRTVGAGVVAKIVK.

A tr-type G domain is found at 10–206 (KLHVNVGTIG…ALDTFIPDPT (197 aa)). The tract at residues 19-26 (GHVDHGKT) is G1. 19–26 (GHVDHGKT) is a GTP binding site. Threonine 26 is a Mg(2+) binding site. The interval 60 to 64 (GITIS) is G2. Residues 81 to 84 (DCPG) form a G3 region. Residues 81-85 (DCPGH) and 136-139 (NKAD) contribute to the GTP site. The segment at 136-139 (NKAD) is G4. Residues 174–176 (SAR) form a G5 region.

It belongs to the TRAFAC class translation factor GTPase superfamily. Classic translation factor GTPase family. EF-Tu/EF-1A subfamily. In terms of assembly, monomer.

It localises to the cytoplasm. It catalyses the reaction GTP + H2O = GDP + phosphate + H(+). In terms of biological role, GTP hydrolase that promotes the GTP-dependent binding of aminoacyl-tRNA to the A-site of ribosomes during protein biosynthesis. This is Elongation factor Tu 1 from Xanthomonas campestris pv. campestris (strain B100).